A 66-amino-acid chain; its full sequence is Beta-toxin Cbo4 (66 aa).

One can recognise an LCN-type CS-alpha/beta domain in the interval 1-66 (KEGYIVDYHT…VWPLPNKRCK (66 aa)). Cystine bridges form between cysteine 12/cysteine 65, cysteine 16/cysteine 41, cysteine 25/cysteine 46, and cysteine 29/cysteine 48. Lysine 66 is modified (lysine amide).

This sequence belongs to the long (4 C-C) scorpion toxin superfamily. Sodium channel inhibitor family. Beta subfamily. As to expression, expressed by the venom gland.

Its subcellular location is the secreted. Beta toxins bind voltage-independently at site-4 of sodium channels and shift the voltage of activation toward more negative potentials thereby affecting sodium channel activation and promoting spontaneous and repetitive firing. Is active on the human voltage-gated sodium channels Nav1.4/SCN4A, Nav1.5/SCN5A and Nav1.6/SCN8A when tested at 200 nM. In vivo, is toxic to mice when intraperitoneally injected. This Centruroides bonito (Scorpion) protein is Beta-toxin Cbo4.